The sequence spans 485 residues: Sodium-coupled neutral amino acid symporter 1 (485 aa).

Topologically, residues 1–74 (MMHFKSGLEL…EYIPGTTSLG (74 aa)) are cytoplasmic. Phosphoserine is present on S6. At T11 the chain carries Phosphothreonine. Phosphoserine occurs at positions 25, 28, 49, and 52. T54 bears the Phosphothreonine mark. A Phosphoserine modification is found at S56. The helical transmembrane segment at 75–97 (MSVFNLSNAIMGSGILGLAFALA) threads the bilayer. The Extracellular portion of the chain corresponds to 98–112 (NTGILLFLILLTSVT). Residues 113–133 (LLSIYSINLLLICSKETGCMV) traverse the membrane as a helical segment. Topologically, residues 134–148 (YEKLGEQVFGTTGKL) are cytoplasmic. Residues 149 to 169 (VIFGATSLQNTGAMLSYLFIV) form a helical membrane-spanning segment. The Extracellular portion of the chain corresponds to 170–188 (KNELPSAIKSLMGEEETFS). The helical transmembrane segment at 189–211 (AWYVDGRVLVVMVTFGIILPLCL) threads the bilayer. The Cytoplasmic segment spans residues 212–216 (LKNLG). Residues 217 to 237 (YLGYTSGFSLSCMVFFLIVVI) traverse the membrane as a helical segment. Residues 238 to 273 (YKKFQIPCMNGEQNSTVSANVTDACTPKYVTFNSKT) are Extracellular-facing. C245 and C262 are oxidised to a cystine. Residues N251 and N257 are each glycosylated (N-linked (GlcNAc...) asparagine). Residues 274-294 (VYALPTIAFAFVCHPSVLPIY) traverse the membrane as a helical segment. Residues 295-310 (SELKDRSQKKMQMVSN) lie on the Cytoplasmic side of the membrane. A helical transmembrane segment spans residues 311–331 (ISFFAMFVMYFLTAIFGYLTF). The Extracellular segment spans residues 332–348 (YEKVQSDLLHKYQSTGD). Residues 349-369 (ILILTVRLAVIVAVILTVPVL) form a helical membrane-spanning segment. Residues 370-391 (FFTVRSSLFELAKKTKFHLCRH) are Cytoplasmic-facing. The chain crosses the membrane as a helical span at residues 392 to 412 (VLVTIILLVIINLLVIFIPSM). Residues 413-414 (KD) lie on the Extracellular side of the membrane. The helical transmembrane segment at 415 to 435 (IFGVVGVTSANMLIFILPSSL) threads the bilayer. The Cytoplasmic portion of the chain corresponds to 436–450 (YLKITNQDGDKNTQR). The helical transmembrane segment at 451–471 (IWAALFLALGVLFSLISIPLV) threads the bilayer. Residues 472-485 (IYDWACSSSNGEGH) lie on the Extracellular side of the membrane.

Belongs to the amino acid/polyamine transporter 2 family. N-glycosylation plays an important role in the L-glutamine transport. In terms of tissue distribution, specifically expressed in brain with the highest levels in cerebellum and thalamus (at protein level). Expressed in glutamatergic, GABAergic and a subset of dopaminergic neurons of the substantia nigra and cholinergic motoneurons (at protein level). Also expressed by ependymal cells lining the ventricle (at protein level). Expression is also detected in spinal cord, heart, colon and placenta.

The protein localises to the cell membrane. It catalyses the reaction L-glutamine(in) + Na(+)(in) = L-glutamine(out) + Na(+)(out). It carries out the reaction L-alanine(in) + Na(+)(in) = L-alanine(out) + Na(+)(out). The catalysed reaction is L-asparagine(in) + Na(+)(in) = L-asparagine(out) + Na(+)(out). The enzyme catalyses L-histidine(in) + Na(+)(in) = L-histidine(out) + Na(+)(out). It catalyses the reaction L-serine(in) + Na(+)(in) = L-serine(out) + Na(+)(out). It carries out the reaction L-cysteine(in) + Na(+)(in) = L-cysteine(out) + Na(+)(out). The catalysed reaction is L-methionine(in) + Na(+)(in) = L-methionine(out) + Na(+)(out). The enzyme catalyses glycine(in) + Na(+)(in) = glycine(out) + Na(+)(out). It catalyses the reaction L-threonine(in) + Na(+)(in) = L-threonine(out) + Na(+)(out). It carries out the reaction L-proline(in) + Na(+)(in) = L-proline(out) + Na(+)(out). Its activity is regulated as follows. Inhibited by alpha-(methylamino)isobutyric acid (MeAIB). Inhibited by lithium, potassium, choline ions, N-methylglucamine. The pH dependence has an allosteric effect on the transport. In terms of biological role, symporter that cotransports short-chain neutral amino acids and sodium ions from the extraccellular to the intracellular side of the cell membrane. The transport is elctrogenic, pH dependent and driven by the Na(+) electrochemical gradient. Participates in the astroglia-derived glutamine transport into GABAergic interneurons for neurotransmitter GABA de novo synthesis. May also contributes to amino acid transport in placental trophoblast. Regulates synaptic plasticity. The polypeptide is Sodium-coupled neutral amino acid symporter 1 (Rattus norvegicus (Rat)).